A 511-amino-acid polypeptide reads, in one-letter code: Maturase K (511 aa).

The protein belongs to the intron maturase 2 family. MatK subfamily.

The protein localises to the plastid. It localises to the chloroplast. Functionally, usually encoded in the trnK tRNA gene intron. Probably assists in splicing its own and other chloroplast group II introns. This is Maturase K from Nandina domestica (Heavenly bamboo).